Reading from the N-terminus, the 303-residue chain is MTAVAIPAVRDYLTDLQGRIVAALEQAGGEAFRTDAWQRAEGGGGVSRLLEGGQLFERAGVLFSHVKGTRLPPSASAHRPELAGRGWEAMGVSMVLHPRNPYVPTTHMNVRMFVAAARPGHAESDVFWFGGGLDLTPYYPFEDDARHFHRACRDALDPHGADYYPRYKQWCDEYFFLKHRNETRGIGGIFFDDLNDPGFDASFALTRSVGDSFLPAYLPIVQARRDMPYGERERDFQAYRRGRYVEFNLVFDRGTLFGLQSGGRTESILLSMPPLAQWRYDWQPQAGTPEAALAEFLRPREWV.

Ser93 is a binding site for substrate. A divalent metal cation contacts are provided by His97 and His107. His107 (proton donor) is an active-site residue. 109-111 contributes to the substrate binding site; that stretch reads NVR. A divalent metal cation is bound by residues His149 and His179. The tract at residues 244–279 is important for dimerization; sequence YVEFNLVFDRGTLFGLQSGGRTESILLSMPPLAQWR. Residue 262-264 participates in substrate binding; sequence GGR.

Belongs to the aerobic coproporphyrinogen-III oxidase family. In terms of assembly, homodimer. The cofactor is a divalent metal cation.

It localises to the cytoplasm. It catalyses the reaction coproporphyrinogen III + O2 + 2 H(+) = protoporphyrinogen IX + 2 CO2 + 2 H2O. The protein operates within porphyrin-containing compound metabolism; protoporphyrin-IX biosynthesis; protoporphyrinogen-IX from coproporphyrinogen-III (O2 route): step 1/1. Involved in the heme biosynthesis. Catalyzes the aerobic oxidative decarboxylation of propionate groups of rings A and B of coproporphyrinogen-III to yield the vinyl groups in protoporphyrinogen-IX. In Bordetella parapertussis (strain 12822 / ATCC BAA-587 / NCTC 13253), this protein is Oxygen-dependent coproporphyrinogen-III oxidase.